Here is a 184-residue protein sequence, read N- to C-terminus: UPF0398 protein BCG9842_B3730 (184 aa).

It belongs to the UPF0398 family.

The sequence is that of UPF0398 protein BCG9842_B3730 from Bacillus cereus (strain G9842).